Here is a 618-residue protein sequence, read N- to C-terminus: Mitochondrial Rho GTPase 2 (618 aa).

Over 1–591 (MKRDVRILLL…LNAVELGAAS (591 aa)) the chain is Cytoplasmic. One can recognise a Miro 1 domain in the interval 2-168 (KRDVRILLLG…FYYAQKAVLH (167 aa)). Gly16, Lys17, Thr18, and Ser19 together coordinate GTP. Thr18 is a binding site for Mg(2+). 2 residues coordinate Mg(2+): Pro35 and Asp57. GTP is bound by residues Ser59, Asn118, Lys119, Asp121, Ala149, and Lys150. EF-hand domains are found at residues 184–219 (ACSR…CFGN) and 304–339 (LGYQ…FPCM). Ca(2+) contacts are provided by Asp197, Asp199, Asn201, Glu208, Asp317, Asp319, Asp321, and Glu328. Residues 416–579 (RNVFLCKVLG…YTKLATAATF (164 aa)) form the Miro 2 domain. The GTP site is built by Gly428, Gly430, Lys431, Ser432, and Ala433. Residue Ser432 participates in Mg(2+) binding. Position 474 (Glu474) interacts with Mg(2+). Positions 528, 530, and 559 each coordinate GTP. A helical; Anchor for type IV membrane protein membrane pass occupies residues 592–614 (FWLRVALGAAVTALVGFTLYRVL). Residues 615-618 (AKNK) are Mitochondrial intermembrane-facing.

It belongs to the mitochondrial Rho GTPase family. As to quaternary structure, homodimer.

It is found in the mitochondrion outer membrane. It carries out the reaction GTP + H2O = GDP + phosphate + H(+). The catalysed reaction is ATP + H2O = ADP + phosphate + H(+). The enzyme catalyses UTP + H2O = UDP + phosphate + H(+). In terms of biological role, atypical mitochondrial nucleoside-triphosphatase (NTPase) involved in mitochondrial trafficking. Probably involved in control of anterograde transport of mitochondria and their subcellular distribution. Can hydrolyze GTP, ATP and UTP. The sequence is that of Mitochondrial Rho GTPase 2 (RHOT2) from Gallus gallus (Chicken).